We begin with the raw amino-acid sequence, 323 residues long: Sphingomyelinase D (323 aa).

A signal peptide spans 1–20 (MISLLRLCSFLAAGSILVQG). His59 is an active-site residue. Mg(2+) is bound by residues Glu79, Asp81, and Asp127. The SMD-tail motif lies at 308-315 (ATNDDNPW).

This sequence belongs to the sphingomyelinase D/phospholipase D family. Mg(2+) is required as a cofactor.

The protein resides in the secreted. The enzyme catalyses a sphingomyelin + H2O = an N-acylsphing-4-enine 1-phosphate + choline + H(+). In terms of biological role, catalyzes the hydrolysis of sphingomyelin. Sphingomyelinases D are produced by some spider in their venoms, but also by arthropods such as ticks, or pathogenic bacteria and fungi. They might play a role in pathogenicity through different mechanisms, such as membrane destabilization and host cell penetration, but also pulmonary inflammation and cutaneous lesions. The chain is Sphingomyelinase D from Trichophyton rubrum (strain ATCC MYA-4607 / CBS 118892) (Athlete's foot fungus).